The sequence spans 218 residues: Pyridoxine/pyridoxamine 5'-phosphate oxidase (218 aa).

Substrate-binding positions include 14 to 17 (RREY) and lysine 72. FMN-binding positions include 67–72 (RIVLLK), 82–83 (YT), arginine 88, lysine 89, and glutamine 111. Positions 129, 133, and 137 each coordinate substrate. FMN contacts are provided by residues 146–147 (QS) and tryptophan 191. 197-199 (RLH) is a substrate binding site. Residue arginine 201 coordinates FMN.

This sequence belongs to the pyridoxamine 5'-phosphate oxidase family. Homodimer. FMN is required as a cofactor.

It carries out the reaction pyridoxamine 5'-phosphate + O2 + H2O = pyridoxal 5'-phosphate + H2O2 + NH4(+). It catalyses the reaction pyridoxine 5'-phosphate + O2 = pyridoxal 5'-phosphate + H2O2. It functions in the pathway cofactor metabolism; pyridoxal 5'-phosphate salvage; pyridoxal 5'-phosphate from pyridoxamine 5'-phosphate: step 1/1. The protein operates within cofactor metabolism; pyridoxal 5'-phosphate salvage; pyridoxal 5'-phosphate from pyridoxine 5'-phosphate: step 1/1. Its function is as follows. Catalyzes the oxidation of either pyridoxine 5'-phosphate (PNP) or pyridoxamine 5'-phosphate (PMP) into pyridoxal 5'-phosphate (PLP). The polypeptide is Pyridoxine/pyridoxamine 5'-phosphate oxidase (Salmonella typhi).